We begin with the raw amino-acid sequence, 596 residues long: Estrogen receptor (596 aa).

The modulating (transactivation AF-1); mediates interaction with MACROD1 stretch occupies residues methionine 1 to tyrosine 185. O-linked (GlcNAc) serine glycosylation is present at serine 10. The segment at glutamate 36–lysine 48 is required for interaction with NCOA1. The segment at glutamate 36 to methionine 175 is interaction with DDX5; self-association. A phosphoserine; by CDK2 mark is found at serine 104 and serine 106. Residue serine 119 is modified to Phosphoserine. Residues glutamate 144–methionine 175 are disordered. Residues serine 155–leucine 166 show a composition bias toward basic and acidic residues. Phosphoserine; by CK2 is present on serine 168. 2 NR C4-type zinc fingers span residues cysteine 186–cysteine 206 and cysteine 222–cysteine 246. A DNA-binding region (nuclear receptor) is located at residues cysteine 186–methionine 251. Residues cysteine 186–leucine 311 form a mediates interaction with DNTTIP2 region. Positions methionine 252–leucine 311 are hinge. Residues aspartate 259–arginine 270 show a composition bias toward basic residues. A disordered region spans residues aspartate 259–glycine 285. Arginine 261 is modified (asymmetric dimethylarginine; by PRMT1). Positions glycine 263–valine 596 are interaction with AKAP13. Residues methionine 265–threonine 595 are self-association. Residues threonine 312 to histidine 548 form the NR LBD domain. The interval threonine 312–threonine 595 is transactivation AF-2. The 17beta-estradiol site is built by glutamate 354 and arginine 395. Cysteine 448 carries S-palmitoyl cysteine lipidation. Histidine 525 provides a ligand contact to 17beta-estradiol. A Phosphotyrosine; by Tyr-kinases modification is found at tyrosine 538. Residue threonine 572 is glycosylated (O-linked (GlcNAc) threonine).

It belongs to the nuclear hormone receptor family. NR3 subfamily. As to quaternary structure, binds DNA as a homodimer. Can form a heterodimer with ESR2. Interacts with coactivator NCOA5. Interacts with PELP1, the interaction is enhanced by 17-beta-estradiol; the interaction increases ESR1 transcriptional activity. Interacts with NCOA7; the interaction is ligand-inducible. Interacts with AKAP13, CUEDC2, HEXIM1, KDM5A, MAP1S, SMARD1, and UBE1C. Interacts with MUC1; the interaction is stimulated by 7 beta-estradiol (E2) and enhances ESR1-mediated transcription. Interacts with DNTTIP2, and UIMC1. Interacts with KMT2D/MLL2. Interacts with ATAD2; the interaction is enhanced by estradiol. Interacts with KIF18A and LDB1. Interacts with RLIM (via its C-terminus). Interacts with MACROD1. Interacts with SH2D4A and PLCG. Interacts with SH2D4A; the interaction blocks binding to PLCG and inhibits estrogen-induced cell proliferation. Interacts with DYNLL1. Interacts with CCDC62; the interaction requires estradiol and appears to enhance the transcription of target genes. Interacts with NR2C1; the interaction prevents homodimerization of ESR1 and suppresses its transcriptional activity and cell growth. Interacts with DNAAF4. Interacts with PRMT2. Interacts with RBFOX2. Interacts with EP300; the interaction is estrogen-dependent and enhanced by CITED1. Interacts with CITED1; the interaction is estrogen-dependent. Interacts with FAM120B, FOXL2, PHB2 and SLC30A9. Interacts with coactivators NCOA3 and NCOA6. Interacts with STK3/MST2 only in the presence of SAV1 and vice-versa. Binds to CSNK1D. Interacts with NCOA2; NCOA2 can interact with ESR1 AF-1 and AF-2 domains simultaneously and mediate their transcriptional synergy. Interacts with DDX5. Interacts with NCOA1; the interaction seems to require a self-association of N-terminal and C-terminal regions. Interacts with ZNF366, DDX17, NFKB1, RELA, SP1 and SP3. Interacts with NRIP1. Interacts with GPER1; the interaction occurs in an estrogen-dependent manner. Interacts with CLOCK and the interaction is stimulated by estrogen. Interacts with TRIP4 (ufmylated); estrogen dependent. Interacts with LMTK3; the interaction phosphorylates ESR1 (in vitro) and protects it against proteasomal degradation. Interacts with CCAR2 (via N-terminus) in a ligand-independent manner. Interacts with ZFHX3. Interacts with SFR1 in a ligand-dependent and -independent manner. Interacts with DCAF13, LATS1 and DCAF1; regulates ESR1 ubiquitination and ubiquitin-mediated proteasomal degradation. Interacts (via DNA-binding domain) with POU4F2 (C-terminus); this interaction increases the estrogen receptor ESR1 transcriptional activity in a DNA- and ligand 17-beta-estradiol-independent manner. Interacts with ESRRB isoform 1. Interacts with UBE3A and WBP2. Interacts with GTF2B. Interacts with RBM39. In the absence of hormonal ligand, interacts with TACC1. Interacts with PI3KR1 or PI3KR2 and PTK2/FAK1. Interacts with SRC. Interacts with BAG1; the interaction is promoted in the absence of estradiol (17-beta-estradiol/E2). Interacts with and ubiquitinated by STUB1; the interaction is promoted in the absence of estradiol (17-beta-estradiol/E2). Interacts with NEDD8. Post-translationally, glycosylated; contains N-acetylglucosamine, probably O-linked. In terms of processing, ubiquitinated; regulated by LATS1 via DCAF1 it leads to ESR1 proteasomal degradation. Deubiquitinated by OTUB1. Ubiquitinated by STUB1/CHIP; in the CA1 hippocampal region following loss of endogenous circulating estradiol (17-beta-estradiol/E2). Ubiquitinated by UBR5, leading to its degradation: UBR5 specifically recognizes and binds ligand-bound ESR1 when it is not associated with coactivators (NCOAs). In presence of NCOAs, the UBR5-degron is not accessible, preventing its ubiquitination and degradation. Phosphorylated by cyclin A/CDK2 and CK1. Phosphorylation probably enhances transcriptional activity. Dephosphorylation at Ser-119 by PPP5C inhibits its transactivation activity. Phosphorylated by LMTK3 (in vitro). Post-translationally, palmitoylated at Cys-448 by ZDHHC7 and ZDHHC21. Palmitoylation is required for plasma membrane targeting and for rapid intracellular signaling via ERK and AKT kinases and cAMP generation, but not for signaling mediated by the nuclear hormone receptor. In terms of processing, dimethylated by PRMT1 at Arg-261. The methylation may favor cytoplasmic localization. Demethylated by JMJD6 at Arg-261.

The protein localises to the nucleus. Its subcellular location is the cytoplasm. The protein resides in the golgi apparatus. It localises to the cell membrane. In terms of biological role, nuclear hormone receptor. The steroid hormones and their receptors are involved in the regulation of eukaryotic gene expression and affect cellular proliferation and differentiation in target tissues. Ligand-dependent nuclear transactivation involves either direct homodimer binding to a palindromic estrogen response element (ERE) sequence or association with other DNA-binding transcription factors, such as AP-1/c-Jun, c-Fos, ATF-2, Sp1 and Sp3, to mediate ERE-independent signaling. Ligand binding induces a conformational change allowing subsequent or combinatorial association with multiprotein coactivator complexes through LXXLL motifs of their respective components. Mutual transrepression occurs between the estrogen receptor (ER) and NF-kappa-B in a cell-type specific manner. Decreases NF-kappa-B DNA-binding activity and inhibits NF-kappa-B-mediated transcription from the IL6 promoter and displace RELA/p65 and associated coregulators from the promoter. Recruited to the NF-kappa-B response element of the CCL2 and IL8 promoters and can displace CREBBP. Present with NF-kappa-B components RELA/p65 and NFKB1/p50 on ERE sequences. Can also act synergistically with NF-kappa-B to activate transcription involving respective recruitment adjacent response elements; the function involves CREBBP. Can activate the transcriptional activity of TFF1. Also mediates membrane-initiated estrogen signaling involving various kinase cascades. Essential for MTA1-mediated transcriptional regulation of BRCA1 and BCAS3. Maintains neuronal survival in response to ischemic reperfusion injury when in the presence of circulating estradiol (17-beta-estradiol/E2). The sequence is that of Estrogen receptor (ESR1) from Bos taurus (Bovine).